The following is a 270-amino-acid chain: Myeloid leukemia factor 1 (270 aa).

Phosphoserine is present on residues S6, S8, S32, and S34. An interaction with COPS3 region spans residues 50–125 (RARNRMGHED…VGDEPPKVFQ (76 aa)). Disordered stretches follow at residues 127–148 (STQT…RDSD) and 221–247 (RSVA…AIEH). Positions 138 to 148 (KETRKALRDSD) are enriched in basic and acidic residues.

This sequence belongs to the MLF family. In terms of assembly, interacts with CENPU. Also interacts with NRBP1/MADM, YWHAZ/14-3-3-zeta and HNRPUL2/MANP. NRBP1 recruits a serine kinase which phosphorylates both itself and MLF1. Phosphorylated MLF1 then binds to YWHAZ and is retained in the cytoplasm. Retained in the nucleus by binding to HNRPUL2. Binds to COPS3/CSN3 which is required for suppression of COP1 and activation of p53. In terms of processing, phosphorylation is required for binding to YWHAZ.

Its subcellular location is the cytoplasm. The protein localises to the nucleus. The protein resides in the cell projection. It localises to the cilium. It is found in the cytoskeleton. Its subcellular location is the cilium basal body. Involved in lineage commitment of primary hemopoietic progenitors by restricting erythroid formation and enhancing myeloid formation. Interferes with erythropoietin-induced erythroid terminal differentiation by preventing cells from exiting the cell cycle through suppression of CDKN1B/p27Kip1 levels. Suppresses COP1 activity via CSN3 which activates p53 and induces cell cycle arrest. Binds DNA and affects the expression of a number of genes so may function as a transcription factor in the nucleus. In Bos taurus (Bovine), this protein is Myeloid leukemia factor 1 (MLF1).